The chain runs to 188 residues: MPVADTSQLTSGVAERYASSLFELALEHGAVDSVTADLDRFQAMLDESAELKRFVASPVFSAEDQLKAIVAISERAGISGFFANFLKVVARNRRLFALPGMIRAFRLIAANHRGEISAEVISAHALSQAQETELKAALKSVTGKDVTISVTVDPSILGGLIVKVGSRQIDTSLRTKLSTLKLALKEVG.

The protein belongs to the ATPase delta chain family. In terms of assembly, F-type ATPases have 2 components, F(1) - the catalytic core - and F(0) - the membrane proton channel. F(1) has five subunits: alpha(3), beta(3), gamma(1), delta(1), epsilon(1). F(0) has three main subunits: a(1), b(2) and c(10-14). The alpha and beta chains form an alternating ring which encloses part of the gamma chain. F(1) is attached to F(0) by a central stalk formed by the gamma and epsilon chains, while a peripheral stalk is formed by the delta and b chains.

Its subcellular location is the cell inner membrane. Its function is as follows. F(1)F(0) ATP synthase produces ATP from ADP in the presence of a proton or sodium gradient. F-type ATPases consist of two structural domains, F(1) containing the extramembraneous catalytic core and F(0) containing the membrane proton channel, linked together by a central stalk and a peripheral stalk. During catalysis, ATP synthesis in the catalytic domain of F(1) is coupled via a rotary mechanism of the central stalk subunits to proton translocation. Functionally, this protein is part of the stalk that links CF(0) to CF(1). It either transmits conformational changes from CF(0) to CF(1) or is implicated in proton conduction. This Rhizobium etli (strain CIAT 652) protein is ATP synthase subunit delta.